A 111-amino-acid polypeptide reads, in one-letter code: Aspartate 1-decarboxylase (111 aa).

Serine 25 (schiff-base intermediate with substrate; via pyruvic acid) is an active-site residue. Serine 25 bears the Pyruvic acid (Ser) mark. Threonine 57 is a substrate binding site. The active-site Proton donor is tyrosine 58. 73 to 75 (GPA) contacts substrate.

This sequence belongs to the PanD family. As to quaternary structure, heterooctamer of four alpha and four beta subunits. Requires pyruvate as cofactor. Is synthesized initially as an inactive proenzyme, which is activated by self-cleavage at a specific serine bond to produce a beta-subunit with a hydroxyl group at its C-terminus and an alpha-subunit with a pyruvoyl group at its N-terminus.

The protein resides in the cytoplasm. It catalyses the reaction L-aspartate + H(+) = beta-alanine + CO2. The protein operates within cofactor biosynthesis; (R)-pantothenate biosynthesis; beta-alanine from L-aspartate: step 1/1. Its function is as follows. Catalyzes the pyruvoyl-dependent decarboxylation of aspartate to produce beta-alanine. The protein is Aspartate 1-decarboxylase of Francisella tularensis subsp. tularensis (strain FSC 198).